The chain runs to 133 residues: Small ribosomal subunit protein uS19 (133 aa).

This sequence belongs to the universal ribosomal protein uS19 family.

Protein S19 forms a complex with S13 that binds strongly to the 16S ribosomal RNA. In Thermococcus onnurineus (strain NA1), this protein is Small ribosomal subunit protein uS19.